A 589-amino-acid chain; its full sequence is Kelch-like protein 25 (589 aa).

A BTB domain is found at 46 to 114 (TDMTLWAGNR…AYSSKIIINE (69 aa)). One can recognise a BACK domain in the interval 149–250 (CLGMMILSDA…LPSELLKEAV (102 aa)). Kelch repeat units follow at residues 296–340 (TLLI…AIGC), 341–388 (KVYI…ELDN), 389–444 (CLYV…SAKL), 446–492 (LFVF…VLGS), 494–538 (IFIM…ASGN), and 539–585 (KVYV…STWK).

As to quaternary structure, component of the BCR(KLHL25) E3 ubiquitin ligase complex, at least composed of cul3, klhl25 and rbx1.

It functions in the pathway protein modification; protein ubiquitination. In terms of biological role, substrate-specific adapter of a BCR (BTB-CUL3-RBX1) E3 ubiquitin ligase complex involved in various processes, such as translation homeostasis and lipid synthesis. The BCR(KLHL25) ubiquitin ligase complex acts by mediating ubiquitination of hypophosphorylated eif4ebp1 (4E-BP1): ubiquitination and subsequent degradation of hypophosphorylated EIF4EBP1 (4E-BP1) probably serves as a homeostatic mechanism to maintain translation and prevent eIF4E inhibition when eIF4E levels are low. The BCR(KLHL25) complex also acts as a regulator of lipid synthesis by mediating ubiquitination and degradation of ACLY, thereby inhibiting lipid synthesis. The protein is Kelch-like protein 25 of Xenopus laevis (African clawed frog).